We begin with the raw amino-acid sequence, 387 residues long: MASSRVSDLPHQRGIAGEIKPKNVAGHGRQNRKVLGDIGNLVTGRDVATGKDVAKKAKQPQQQTKAEVIVISPDENEKCKPHFSRRTHIRGTKTFTATLRARSKAASGLKDAVIDIDAVDANNELAAVEYVEDIFKFYRTVEEEGGIKDYIGSQPEINEKMRSILIDWLVDVHRKFELMPETLYLTINLVDRFLSLTMVHRRELQLLGLGAMLIACKYEEIWAPEVNDFVCISDNAYNRKQVLAMEKSILGQVEWYITVPTPYVFLARYVKAAVPCDAEMEKLVFYLAELGLMQYPIVVLNRPSMLAASAVYAARQILKKTPFWTETLKHHTGYSEDEIMEHAKMLMKLRDSASESKLIAVFKKYSVSENAEVALLPSLDDFSVSCA.

Residues 1 to 29 form a disordered region; that stretch reads MASSRVSDLPHQRGIAGEIKPKNVAGHGR.

Belongs to the cyclin family. Cyclin AB subfamily.

In Arabidopsis thaliana (Mouse-ear cress), this protein is Cyclin-B1-4 (CYCB1-4).